Consider the following 449-residue polypeptide: Phosphoglucosamine mutase (449 aa).

Catalysis depends on Ser-104, which acts as the Phosphoserine intermediate. Mg(2+) contacts are provided by Ser-104, Asp-243, Asp-245, and Asp-247. At Ser-104 the chain carries Phosphoserine.

This sequence belongs to the phosphohexose mutase family. Mg(2+) serves as cofactor. Activated by phosphorylation.

The enzyme catalyses alpha-D-glucosamine 1-phosphate = D-glucosamine 6-phosphate. In terms of biological role, catalyzes the conversion of glucosamine-6-phosphate to glucosamine-1-phosphate. The chain is Phosphoglucosamine mutase from Xanthomonas campestris pv. campestris (strain 8004).